The following is a 409-amino-acid chain: Nucleoprotein (409 aa).

2 disordered regions span residues 1–84 (MASG…KGGR) and 121–194 (ADTK…DSGD). The span at 15–31 (PVIKLGGPKPPKVGSSG) shows a compositional bias: low complexity. The RNA-binding stretch occupies residues 29–160 (SSGNASWFQA…GNFRWDFIPL (132 aa)). One can recognise a CoV N NTD domain in the interval 31–156 (GNASWFQAIK…GGPDGNFRWD (126 aa)). The segment covering 70–84 (YWRRQARFKPGKGGR) has biased composition (basic residues). The segment covering 162-179 (RGRSGRSTAASSAAASRA) has biased composition (low complexity). Residues 180–192 (PSREGSRGRRSDS) show a composition bias toward basic and acidic residues. Residues Ser190 and Ser192 each carry the phosphoserine; by host modification. Residues 215–331 (TKAKADEMAH…QCVDGVGTRP (117 aa)) form the CoV N CTD domain. Residues 226–333 (RYCKRTIPPN…VDGVGTRPKD (108 aa)) form a dimerization region. 2 cysteine pairs are disulfide-bonded: Cys281–Cys308 and Cys320–Cys323. The segment at 327-396 (VGTRPKDDEP…QLEFYDEPKV (70 aa)) is disordered. Basic residues predominate over residues 358–367 (QRPKKEKKLK). Over residues 368–384 (KQDDEADKALTSDEERN) the composition is skewed to basic and acidic residues. Thr378 carries the post-translational modification Phosphothreonine; by host. Ser379 carries the post-translational modification Phosphoserine; by host.

Belongs to the gammacoronavirus nucleocapsid protein family. As to quaternary structure, homooligomer. Both monomeric and oligomeric forms interact with RNA. Interacts with protein M. Interacts with NSP3; this interaction serves to tether the genome to the newly translated replicase-transcriptase complex at a very early stage of infection. ADP-ribosylated. The ADP-ribosylation is retained in the virion during infection. Post-translationally, phosphorylated on serine and threonine residues.

The protein resides in the virion. It localises to the host endoplasmic reticulum-Golgi intermediate compartment. The protein localises to the host Golgi apparatus. Its function is as follows. Packages the positive strand viral genome RNA into a helical ribonucleocapsid (RNP) and plays a fundamental role during virion assembly through its interactions with the viral genome and membrane protein M. Plays an important role in enhancing the efficiency of subgenomic viral RNA transcription as well as viral replication. In Gallus gallus (Chicken), this protein is Nucleoprotein.